The sequence spans 148 residues: Hemoglobin subunit gamma (148 aa).

The region spanning 3 to 148 (HFTAEEKAII…VAIAMGHKYH (146 aa)) is the Globin domain. Residues His-64 and His-93 each coordinate heme b.

Belongs to the globin family. In terms of assembly, heterotetramer of two alpha chains and two gamma chains in fetal hemoglobin (Hb F). In terms of tissue distribution, red blood cells.

Functionally, gamma chains make up the fetal hemoglobin F, in combination with alpha chains. This is Hemoglobin subunit gamma (HBG) from Carlito syrichta (Philippine tarsier).